Reading from the N-terminus, the 350-residue chain is Inhibin beta E chain (350 aa).

The signal sequence occupies residues 1–21 (MGLSNVQLWTILLWALAWVQS). The propeptide occupies 22–236 (TRSACPSCGA…EPGAGRARRR (215 aa)). N-linked (GlcNAc...) asparagine glycosylation occurs at asparagine 198. Disulfide bonds link cysteine 240–cysteine 248, cysteine 247–cysteine 315, cysteine 276–cysteine 347, and cysteine 280–cysteine 349.

This sequence belongs to the TGF-beta family. As to quaternary structure, homodimeric or heterodimeric through association with alpha and beta subunits, linked by one or more disulfide bonds. Inhibins are heterodimers of one alpha and one beta subunit. Activins are homo- or heterodimers of beta subunits only.

The protein localises to the secreted. Functionally, inhibins and activins inhibit and activate, respectively, the secretion of follitropin by the pituitary gland. Inhibins/activins are involved in regulating a number of diverse functions such as hypothalamic and pituitary hormone secretion, gonadal hormone secretion, germ cell development and maturation, erythroid differentiation, insulin secretion, nerve cell survival, embryonic axial development or bone growth, depending on their subunit composition. Inhibins appear to oppose the functions of activins. Activin E is a homodimer of INHBE secreted by the liver that plays a crucial role in regulating metabolic homeostasis particularly in lipid metabolism and energy homeostasis. Plays a central role in the regulation of adipose tissue lipolysis by preventing the influx of fatty acids from adipose tissue into the liver. Mechanistically, signals via ACVR1C to activate SMAD2/3 signaling, suppressing PPARG target genes in adipose tissue, thereby reducing liver lipid content and improving glycemic control. Induces beige adipocyte formation and thermogenesis in response to cold exposure. This chain is Inhibin beta E chain (Inhbe), found in Rattus norvegicus (Rat).